A 142-amino-acid polypeptide reads, in one-letter code: Large ribosomal subunit protein uL11 (142 aa).

The protein belongs to the universal ribosomal protein uL11 family. In terms of assembly, part of the ribosomal stalk of the 50S ribosomal subunit. Interacts with L10 and the large rRNA to form the base of the stalk. L10 forms an elongated spine to which L12 dimers bind in a sequential fashion forming a multimeric L10(L12)X complex. One or more lysine residues are methylated.

Functionally, forms part of the ribosomal stalk which helps the ribosome interact with GTP-bound translation factors. The sequence is that of Large ribosomal subunit protein uL11 from Ruthia magnifica subsp. Calyptogena magnifica.